The primary structure comprises 206 residues: MEFSSKLIEKAVNEMSQLPGIGKRTALRLVLHLLKQPKEQTGFLSQALLNMREDIKFCENCHNISDTKVCEICANSVRNHQTICVVEDIRDVMAIENTGQYKGIYHVLGGKISPIEGVGPSQLNISSLVEKVKSGKVVEIIFALSSTMEGDTTNFYIYKQIAESEIIISTIARGISVGDELEYADEITLGRSILHRVPFEKTFKNN.

The segment at Cys-58 to Cys-73 adopts a C4-type zinc-finger fold. Residues Gln-81 to Ser-176 form the Toprim domain.

This sequence belongs to the RecR family.

In terms of biological role, may play a role in DNA repair. It seems to be involved in an RecBC-independent recombinational process of DNA repair. It may act with RecF and RecO. The sequence is that of Recombination protein RecR from Flavobacterium johnsoniae (strain ATCC 17061 / DSM 2064 / JCM 8514 / BCRC 14874 / CCUG 350202 / NBRC 14942 / NCIMB 11054 / UW101) (Cytophaga johnsonae).